The following is a 1956-amino-acid chain: MEFPIGSLETNNFRRFTPESLVEIEKQIAAKQGTKKAREKHREQKDQEEKPRPQLDLKACNQLPKFYGELPAELIGEPLEDLDPFYSTHRTFMVLNKGRTISRFSATRALWLFSPFNLIRRTAIKVSVHSWFSLFITVTILVNCVCMTRTDLPEKIEYVFTVIYTFEALIKILARGFCLNEFTYLRDPWNWLDFSVITLAYVGTAIDLRGISGLRTFRVLRALKTVSVIPGLKVIVGALIHSVKKLADVTILTIFCLSVFALVGLQLFKGNLKNKCVKNDMAVNETTNYSSHRKPDIYINKRGTSDPLLCGNGSDSGHCPDGYICLKTSDNPDFNYTSFDSFAWAFLSLFRLMTQDSWERLYQQTLRTSGKIYMIFFVLVIFLGSFYLVNLILAVVTMAYEEQNQATTDEIEAKEKKFQEALEMLRKEQEVLAALGIDTTSLHSHNGSPLTSKNASERRHRIKPRVSEGSTEDNKSPRSDPYNQRRMSFLGLASGKRRASHGSVFHFRSPGRDISLPEGVTDDGVFPGDHESHRGSLLLGGGAGQQGPLPRSPLPQPSNPDSRHGEDEHQPPPTSELAPGAVDVSAFDAGQKKTFLSAEYLDEPFRAQRAMSVVSIITSVLEELEESEQKCPPCLTSLSQKYLIWDCCPMWVKLKTILFGLVTDPFAELTITLCIVVNTIFMAMEHHGMSPTFEAMLQIGNIVFTIFFTAEMVFKIIAFDPYYYFQKKWNIFDCIIVTVSLLELGVAKKGSLSVLRSFRLLRVFKLAKSWPTLNTLIKIIGNSVGALGNLTIILAIIVFVFALVGKQLLGENYRNNRKNISAPHEDWPRWHMHDFFHSFLIVFRILCGEWIENMWACMEVGQKSICLILFLTVMVLGNLVVLNLFIALLLNSFSADNLTAPEDDGEVNNLQVALARIQVFGHRTKQALCSFFSRSCPFPQPKAEPELVVKLPLSSSKAENHIAANTARGSSGGLQAPRGPRDEHSDFIANPTVWVSVPIAEGESDLDDLEDDGGEDAQSFQQEVIPKGQQEQLQQVERCGDHLTPRSPGTGTSSEDLAPSLGETWKDESVPQVPAEGVDDTSSSEGSTVDCLDPEEILRKIPELADDLEEPDDCFTEGCIRHCPCCKLDTTKSPWDVGWQVRKTCYRIVEHSWFESFIIFMILLSSGSLAFEDYYLDQKPTVKALLEYTDRVFTFIFVFEMLLKWVAYGFKKYFTNAWCWLDFLIVNISLISLTAKILEYSEVAPIKALRTLRALRPLRALSRFEGMRVVVDALVGAIPSIMNVLLVCLIFWLIFSIMGVNLFAGKFWRCINYTDGEFSLVPLSIVNNKSDCKIQNSTGSFFWVNVKVNFDNVAMGYLALLQVATFKGWMDIMYAAVDSREVNMQPKWEDNVYMYLYFVIFIIFGGFFTLNLFVGVIIDNFNQQKKKLGGQDIFMTEEQKKYYNAMKKLGSKKPQKPIPRPLNKFQGFVFDIVTRQAFDITIMVLICLNMITMMVETDDQSEEKTKILGKINQFFVAVFTGECVMKMFALRQYYFTNGWNVFDFIVVVLSIASLIFSAILKSLQSYFSPTLFRVIRLARIGRILRLIRAAKGIRTLLFALMMSLPALFNIGLLLFLVMFIYSIFGMSSFPHVRWEAGIDDMFNFQTFANSMLCLFQITTSAGWDGLLSPILNTGPPYCDPNLPNSNGTRGDCGSPAVGIIFFTTYIIISFLIMVNMYIAVILENFNVATEESTEPLSEDDFDMFYETWEKFDPEATQFITFSALSDFADTLSGPLRIPKPNRNILIQMDLPLVPGDKIHCLDILFAFTKNVLGESGELDSLKANMEEKFMATNLSKSSYEPIATTLRWKQEDISATVIQKAYRSYVLHRSMALSNTPCVPRAEEEAASLPDEGFVAFTANENCVLPDKSETASATSFPPSYESVTRGLSDRVNMRTSSSIQNEDEATSMELIAPGP.

Residues 1 to 125 (MEFPIGSLET…FNLIRRTAIK (125 aa)) are Cytoplasmic-facing. Positions 27–54 (QIAAKQGTKKAREKHREQKDQEEKPRPQ) are disordered. A compositionally biased stretch (basic and acidic residues) spans 40–54 (KHREQKDQEEKPRPQ). One copy of the I repeat lies at 116–405 (FNLIRRTAIK…VTMAYEEQNQ (290 aa)). A helical transmembrane segment spans residues 126–149 (VSVHSWFSLFITVTILVNCVCMTR). At 150–154 (TDLPE) the chain is on the extracellular side. The helical transmembrane segment at 155-174 (KIEYVFTVIYTFEALIKILA) threads the bilayer. The Cytoplasmic portion of the chain corresponds to 175–187 (RGFCLNEFTYLRD). The chain crosses the membrane as a helical span at residues 188 to 206 (PWNWLDFSVITLAYVGTAI). Over 207–212 (DLRGIS) the chain is Extracellular. A helical; Voltage-sensor membrane pass occupies residues 213–232 (GLRTFRVLRALKTVSVIPGL). Residues 233–248 (KVIVGALIHSVKKLAD) lie on the Cytoplasmic side of the membrane. A helical transmembrane segment spans residues 249 to 272 (VTILTIFCLSVFALVGLQLFKGNL). Over 273 to 341 (KNKCVKNDMA…PDFNYTSFDS (69 aa)) the chain is Extracellular. An intrachain disulfide couples C276 to C319. 4 N-linked (GlcNAc...) asparagine glycosylation sites follow: N284, N288, N312, and N335. The pore-forming intramembrane region spans 342 to 366 (FAWAFLSLFRLMTQDSWERLYQQTL). Residues 367 to 373 (RTSGKIY) lie on the Extracellular side of the membrane. The helical transmembrane segment at 374 to 399 (MIFFVLVIFLGSFYLVNLILAVVTMA) threads the bilayer. Over 400 to 659 (YEEQNQATTD…MWVKLKTILF (260 aa)) the chain is Cytoplasmic. A phosphoserine mark is found at S441, S444, S467, and S479. Residues 443–454 (HSHNGSPLTSKN) are compositionally biased toward polar residues. Disordered regions lie at residues 443 to 485 (HSHN…YNQR) and 500 to 580 (SHGS…LAPG). Residues 561-570 (DSRHGEDEHQ) show a composition bias toward basic and acidic residues. Phosphoserine is present on residues S612 and S615. An II repeat occupies 647-911 (CCPMWVKLKT…EDDGEVNNLQ (265 aa)). A helical transmembrane segment spans residues 660-684 (GLVTDPFAELTITLCIVVNTIFMAM). The Extracellular portion of the chain corresponds to 685-695 (EHHGMSPTFEA). A helical transmembrane segment spans residues 696 to 719 (MLQIGNIVFTIFFTAEMVFKIIAF). Residues 720–727 (DPYYYFQK) lie on the Cytoplasmic side of the membrane. A helical membrane pass occupies residues 728-747 (KWNIFDCIIVTVSLLELGVA). Residues 748–753 (KKGSLS) lie on the Extracellular side of the membrane. Residues 754-773 (VLRSFRLLRVFKLAKSWPTL) traverse the membrane as a helical; Voltage-sensor segment. Residues 774 to 789 (NTLIKIIGNSVGALGN) lie on the Cytoplasmic side of the membrane. Residues 790–810 (LTIILAIIVFVFALVGKQLLG) traverse the membrane as a helical segment. Residues 811-834 (ENYRNNRKNISAPHEDWPRWHMHD) lie on the Extracellular side of the membrane. N819 carries an N-linked (GlcNAc...) asparagine glycan. Positions 835–855 (FFHSFLIVFRILCGEWIENMW) form an intramembrane region, pore-forming. At 856–864 (ACMEVGQKS) the chain is on the extracellular side. C857 and C866 form a disulfide bridge. The chain crosses the membrane as a helical span at residues 865–890 (ICLILFLTVMVLGNLVVLNLFIALLL). Topologically, residues 891–1147 (NSFSADNLTA…GWQVRKTCYR (257 aa)) are cytoplasmic. Disordered stretches follow at residues 963–986 (AANTARGSSGGLQAPRGPRDEHSD) and 1041–1089 (DHLT…GSTV). Residues 1140–1449 (QVRKTCYRIV…KKYYNAMKKL (310 aa)) form an III repeat. The chain crosses the membrane as a helical span at residues 1148–1171 (IVEHSWFESFIIFMILLSSGSLAF). At 1172–1184 (EDYYLDQKPTVKA) the chain is on the extracellular side. The helical transmembrane segment at 1185 to 1210 (LLEYTDRVFTFIFVFEMLLKWVAYGF) threads the bilayer. At 1211-1216 (KKYFTN) the chain is on the cytoplasmic side. Residues 1217 to 1238 (AWCWLDFLIVNISLISLTAKIL) form a helical membrane-spanning segment. Residues 1239-1242 (EYSE) lie on the Extracellular side of the membrane. The chain crosses the membrane as a helical; Voltage-sensor span at residues 1243-1264 (VAPIKALRTLRALRPLRALSRF). Residues 1265 to 1283 (EGMRVVVDALVGAIPSIMN) lie on the Cytoplasmic side of the membrane. A helical transmembrane segment spans residues 1284 to 1311 (VLLVCLIFWLIFSIMGVNLFAGKFWRCI). N-linked (GlcNAc...) asparagine glycans are attached at residues N1312, N1328, and N1336. Over 1312-1353 (NYTDGEFSLVPLSIVNNKSDCKIQNSTGSFFWVNVKVNFDNV) the chain is Extracellular. Positions 1354-1375 (AMGYLALLQVATFKGWMDIMYA) form an intramembrane region, pore-forming. Residues 1376–1391 (AVDSREVNMQPKWEDN) lie on the Extracellular side of the membrane. Residues 1392–1418 (VYMYLYFVIFIIFGGFFTLNLFVGVII) form a helical membrane-spanning segment. Residues 1419–1471 (DNFNQQKKKLGGQDIFMTEEQKKYYNAMKKLGSKKPQKPIPRPLNKFQGFVFD) are Cytoplasmic-facing. S1451 carries the phosphoserine; by PKC modification. One copy of the IV repeat lies at 1458–1757 (IPRPLNKFQG…WEKFDPEATQ (300 aa)). The helical transmembrane segment at 1472 to 1495 (IVTRQAFDITIMVLICLNMITMMV) threads the bilayer. Residues 1496-1506 (ETDDQSEEKTK) lie on the Extracellular side of the membrane. Residues 1507-1530 (ILGKINQFFVAVFTGECVMKMFAL) traverse the membrane as a helical segment. Residues 1531-1536 (RQYYFT) are Cytoplasmic-facing. A helical transmembrane segment spans residues 1537-1560 (NGWNVFDFIVVVLSIASLIFSAIL). The Extracellular segment spans residues 1561-1572 (KSLQSYFSPTLF). Residues 1573-1594 (RVIRLARIGRILRLIRAAKGIR) traverse the membrane as a helical; Voltage-sensor segment. The Cytoplasmic portion of the chain corresponds to 1595 to 1609 (TLLFALMMSLPALFN). A helical membrane pass occupies residues 1610–1632 (IGLLLFLVMFIYSIFGMSSFPHV). Topologically, residues 1633-1646 (RWEAGIDDMFNFQT) are extracellular. Positions 1647–1669 (FANSMLCLFQITTSAGWDGLLSP) form an intramembrane region, pore-forming. Residues 1670–1697 (ILNTGPPYCDPNLPNSNGTRGDCGSPAV) are Extracellular-facing. An N-linked (GlcNAc...) asparagine glycan is attached at N1686. Residues 1698–1722 (GIIFFTTYIIISFLIMVNMYIAVIL) form a helical membrane-spanning segment. Over 1723 to 1956 (ENFNVATEES…TSMELIAPGP (234 aa)) the chain is Cytoplasmic. One can recognise an IQ domain in the interval 1851–1880 (EDISATVIQKAYRSYVLHRSMALSNTPCVP). Positions 1909 to 1956 (SETASATSFPPSYESVTRGLSDRVNMRTSSSIQNEDEATSMELIAPGP) are disordered.

It belongs to the sodium channel (TC 1.A.1.10) family. Nav1.8/SCN10A subfamily. The channel consists of an ion conducting pore forming alpha-subunit regulated by one or more associated auxiliary subunits SCN1B, SCN2B and SCN3B; electrophysiological properties may vary depending on the type of the associated beta subunits. Found in a number of complexes with PRX, DYNLT1 and PDZD2. Interacts with proteins such as FSTL1, PRX, DYNLT1, PDZD2, S100A10 and many others. Interacts with NEDD4 and NEDD4L. In terms of processing, ubiquitinated by NEDD4L; which promotes its endocytosis. Phosphorylation at Ser-1451 by PKC in a highly conserved cytoplasmic loop slows inactivation of the sodium channel and reduces peak sodium currents. Post-translationally, lacks the cysteine which covalently binds the conotoxin GVIIJ. This cysteine (position 816) is speculated in other sodium channel subunits alpha to be implied in covalent binding with the sodium channel subunit beta-2 or beta-4. Expressed in the dorsal root ganglia and sciatic nerve.

Its subcellular location is the cell membrane. It carries out the reaction Na(+)(in) = Na(+)(out). Tetrodotoxin-resistant channel that mediates the voltage-dependent sodium ion permeability of excitable membranes. Assuming opened or closed conformations in response to the voltage difference across the membrane, the protein forms a sodium-selective channel through which sodium ions may pass in accordance with their electrochemical gradient. Plays a role in neuropathic pain mechanisms. The sequence is that of Sodium channel protein type 10 subunit alpha from Homo sapiens (Human).